The primary structure comprises 506 residues: GMP synthase [glutamine-hydrolyzing] (506 aa).

Positions 4–192 (KLIILDFGSQ…FLDICGMKRD (189 aa)) constitute a Glutamine amidotransferase type-1 domain. Cys79 (nucleophile) is an active-site residue. Catalysis depends on residues His167 and Glu169. The region spanning 193-381 (WTPASFIEAT…LGMMPHLIHR (189 aa)) is the GMPS ATP-PPase domain. Position 220 to 226 (220 to 226 (SGGVDSS)) interacts with ATP.

As to quaternary structure, homodimer.

It carries out the reaction XMP + L-glutamine + ATP + H2O = GMP + L-glutamate + AMP + diphosphate + 2 H(+). Its pathway is purine metabolism; GMP biosynthesis; GMP from XMP (L-Gln route): step 1/1. Catalyzes the synthesis of GMP from XMP. The chain is GMP synthase [glutamine-hydrolyzing] from Porphyromonas gingivalis (strain ATCC 33277 / DSM 20709 / CIP 103683 / JCM 12257 / NCTC 11834 / 2561).